The chain runs to 76 residues: uncharacterized protein (76 aa).

A helical membrane pass occupies residues 53-70 (STKLHIIWFCIFAIFIAV).

It is found in the membrane. This is an uncharacterized protein from Haemophilus influenzae (strain ATCC 51907 / DSM 11121 / KW20 / Rd).